The following is a 2221-amino-acid chain: MVNENTRMYIPEENHQGSNYGSPRPAHANMNANAAAGLAPEHIPTPGAALSWQAAIDAARQAKLMGSAGNATISTVSSTQRKRQQYGKPKKQGSTTATRPPRALLCLTLKNPIRRACISIVEWKPFEIIILLTIFANCVALAIYIPFPEDDSNATNSNLERVEYLFLIIFTVEAFLKVIAYGLLFHPNAYLRNGWNLLDFIIVVVGLFSAILEQATKADGANALGGKGAGFDVKALRAFRVLRPLRLVSGVPSLQVVLNSIIKAMVPLLHIALLVLFVIIIYAIIGLELFMGKMHKTCYNQEGIADVPAEDDPSPCALETGHGRQCQNGTVCKPGWDGPKHGITNFDNFAFAMLTVFQCITMEGWTDVLYWVNDAVGRDWPWIYFVTLIIIGSFFVLNLVLGVLSGEFSKEREKAKARGDFQKLREKQQLEEDLKGYLDWITQAEDIDPENEDEGMDEEKPRNMSMPTSETESVNTENVAGGDIEGENCGARLAHRISKSKFSRYWRRWNRFCRRKCRAAVKSNVFYWLVIFLVFLNTLTIASEHYNQPNWLTEVQDTANKALLALFTAEMLLKMYSLGLQAYFVSLFNRFDCFVVCGGILETILVETKIMSPLGISVLRCVRLLRIFKITRYWNSLSNLVASLLNSVRSIASLLLLLFLFIIIFSLLGMQLFGGKFNFDEMQTRRSTFDNFPQSLLTVFQILTGEDWNSVMYDGIMAYGGPSFPGMLVCIYFIILFICGNYILLNVFLAIAVDNLADAESLTSAQKEEEEEKERKKLARTASPEKKQELVEKPAVGESKEEKIELKSITADGESPPATKINMDDLQPNENEDKSPYPNPETTGEEDEEEPEMPVGPRPRPLSELHLKEKAVPMPEASAFFIFSSNNRFRLQCHRIVNDTIFTNLILFFILLSSISLAAEDPVQHTSFRNHILFYFDIVFTTIFTIEIALKILGNADYVFTSIFTLEIILKMTAYGAFLHKGSFCRNYFNILDLLVVSVSLISFGIQSSAINVVKILRVLRVLRPLRAINRAKGLKHVVQCVFVAIRTIGNIVIVTTLLQFMFACIGVQLFKGKLYTCSDSSKQTEAECKGNYITYKDGEVDHPIIQPRSWENSKFDFDNVLAAMMALFTVSTFEGWPELLYRSIDSHTEDKGPIYNYRVEISIFFIIYIIIIAFFMMNIFVGFVIVTFQEQGEQEYKNCELDKNQRQCVEYALKARPLRRYIPKNQHQYKVWYVVNSTYFEYLMFVLILLNTICLAMQHYGQSCLFKIAMNILNMLFTGLFTVEMILKLIAFKPKGYFSDPWNVFDFLIVIGSIIDVILSETNHYFCDAWNTFDALIVVGSIVDIAITEVNPAEHTQCSPSMNAEENSRISITFFRLFRVMRLVKLLSRGEGIRTLLWTFIKSFQALPYVALLIVMLFFIYAVIGMQVFGKIALNDTTEINRNNNFQTFPQAVLLLFRCATGEAWQDIMLACMPGKKCAPESEPSNSTEGETPCGSSFAVFYFISFYMLCAFLIINLFVAVIMDNFDYLTRDWSILGPHHLDEFKRIWAEYDPEAKGRIKHLDVVTLLRRIQPPLGFGKLCPHRVACKRLVSMNMPLNSDGTVMFNATLFALVRTALRIKTEGNLEQANEELRAIIKKIWKRTSMKLLDQVVPPAGDDEVTVGKFYATFLIQEYFRKFKKRKEQGLVGKPSQRNALSLQAGLRTLHDIGPEIRRAISGDLTAEEELDKAMKEAVSAASEDDIFRRAGGLFGNHVSYYQSDGRSAFPQTFTTQRPLHINKAGSSQGDTESPSHEKLVDSTFTPSSYSSTGSNANINNANNTALGRLPRPAGYPSTVSTVEGHGPPLSPAIRVQEVAWKLSSNRERHVPMCEDLELRRDSGSAGTQAHCLLLRKANPSRCHSRESQAAMAGQEETSQDETYEVKMNHDTEACSEPSLLSTEMLSYQDDENRQLTLPEEDKRDIRQSPKRGFLRSASLGRRASFHLECLKRQKDRGGDISQKTVLPLHLVHHQALAVAGLSPLLQRSHSPASFPRPFATPPATPGSRGWPPQPVPTLRLEGVESSEKLNSSFPSIHCGSWAETTPGGGGSSAARRVRPVSLMVPSQAGAPGRQFHGSASSLVEAVLISEGLGQFAQDPKFIEVTTQELADACDMTIEEMESAADNILSGGAPQSPNGALLPFVNCRDAGQDRAGGEEDAGCVRARGRPSEEELQDSRVYVSSL.

A disordered region spans residues Met-1–Tyr-20. Residues Met-1 to Lys-124 are Cytoplasmic-facing. A calmodulin-binding region spans residues Gly-47 to Ala-68. The segment at Ile-73–Thr-98 is disordered. Residues Gln-80 to Lys-91 show a composition bias toward basic residues. An I repeat occupies Asn-111 to Phe-408. Residues Pro-125 to Ile-143 form a helical membrane-spanning segment. Residues Tyr-144–Asn-158 lie on the Extracellular side of the membrane. The N-linked (GlcNAc...) asparagine glycan is linked to Asn-153. A helical membrane pass occupies residues Leu-159–Ile-179. Residues Ala-180–Asn-188 are Cytoplasmic-facing. The chain crosses the membrane as a helical span at residues Ala-189 to Ser-209. At Ala-210–Asp-232 the chain is on the extracellular side. The chain crosses the membrane as a helical span at residues Val-233 to Val-251. At Pro-252 to Leu-268 the chain is on the cytoplasmic side. Residues Leu-269 to Phe-290 traverse the membrane as a helical segment. Residues Met-291–Ala-350 are Extracellular-facing. Intrachain disulfides connect Cys-298–Cys-326 and Cys-316–Cys-332. Residue Asn-328 is glycosylated (N-linked (GlcNAc...) asparagine). An intramembrane region (pore-forming) is located at residues Phe-351 to Val-372. The short motif at Thr-361–Gly-364 is the Selectivity filter of repeat I element. Residue Glu-363 participates in Ca(2+) binding. Residues Asn-373–Trp-380 lie on the Extracellular side of the membrane. The chain crosses the membrane as a helical span at residues Pro-381–Leu-401. Residues Gly-402 to Asn-524 lie on the Cytoplasmic side of the membrane. An AID/alpha-interaction domain; mediates interaction with the beta subunit region spans residues Gln-428–Glu-445. The segment at Pro-449–Gly-481 is disordered. Positions Ser-465 to Asn-478 are enriched in polar residues. A Phosphoserine modification is found at Ser-469. Residue Thr-476 is modified to Phosphothreonine. An II repeat occupies Asn-510–Leu-756. Residues Val-525–Ser-543 traverse the membrane as a helical segment. Residues Glu-544 to Glu-554 lie on the Extracellular side of the membrane. The chain crosses the membrane as a helical span at residues Val-555–Met-575. Residues Tyr-576–Ser-586 lie on the Cytoplasmic side of the membrane. A helical transmembrane segment spans residues Leu-587–Val-606. Over Glu-607–Gly-615 the chain is Extracellular. A helical membrane pass occupies residues Ile-616 to Trp-634. At Asn-635–Ser-653 the chain is on the cytoplasmic side. The chain crosses the membrane as a helical span at residues Leu-654–Phe-673. Residues Gly-674–Pro-693 lie on the Extracellular side of the membrane. The pore-forming intramembrane region spans Gln-694–Gly-715. The Selectivity filter of repeat II signature appears at Thr-704 to Asp-707. Position 706 (Glu-706) interacts with Ca(2+). Over Ile-716–Pro-725 the chain is Extracellular. The helical transmembrane segment at Gly-726 to Leu-745 threads the bilayer. Residues Asn-746 to Thr-900 lie on the Cytoplasmic side of the membrane. The segment at Ser-764–Pro-861 is disordered. Residues Ser-783–Glu-792 show a composition bias toward basic and acidic residues. Residues Ser-808 and Ser-815 each carry the phosphoserine modification. The tract at residues Asn-829–Glu-876 is interaction with STAC2. Positions Thr-843–Glu-852 are enriched in acidic residues. The III repeat unit spans residues Asn-887–Phe-1189. The chain crosses the membrane as a helical span at residues Ile-901 to Ala-919. At Glu-920–His-931 the chain is on the extracellular side. The helical transmembrane segment at Ile-932 to Ile-952 threads the bilayer. Over Leu-953–Asn-987 the chain is Cytoplasmic. Residues Tyr-988–Ile-1006 traverse the membrane as a helical segment. At Gln-1007–Val-1013 the chain is on the extracellular side. The helical transmembrane segment at Val-1014–Ala-1032 threads the bilayer. The Cytoplasmic portion of the chain corresponds to Lys-1033–Asn-1051. Residues Ile-1052–Phe-1071 traverse the membrane as a helical segment. At Lys-1072–Val-1121 the chain is on the extracellular side. Cys-1078 and Cys-1089 are disulfide-bonded. A dihydropyridine binding region spans residues Arg-1109–Lys-1198. The segment at residues Leu-1122–Tyr-1142 is an intramembrane region (pore-forming). A Selectivity filter of repeat III motif is present at residues Thr-1133–Gly-1136. Glu-1135 is a Ca(2+) binding site. At Arg-1143–Arg-1159 the chain is on the extracellular side. A helical membrane pass occupies residues Val-1160–Phe-1181. Over Val-1182–Thr-1239 the chain is Cytoplasmic. Residues Asn-1226–Phe-1527 form an IV repeat. The helical transmembrane segment at Tyr-1240 to Tyr-1261 threads the bilayer. Topologically, residues Gly-1262–Ile-1269 are extracellular. Residues Ala-1270–Ile-1291 form a helical membrane-spanning segment. Over Ala-1292 to Asp-1301 the chain is Cytoplasmic. A helical transmembrane segment spans residues Pro-1302 to Ser-1321. Residues Glu-1322–Ser-1372 are Extracellular-facing. A helical membrane pass occupies residues Ile-1373 to Gly-1391. Residues Glu-1392–Pro-1409 lie on the Cytoplasmic side of the membrane. The helical transmembrane segment at Tyr-1410–Phe-1430 threads the bilayer. At Gly-1431–Gln-1452 the chain is on the extracellular side. Asn-1436 carries an N-linked (GlcNAc...) asparagine glycan. The pore-forming intramembrane region spans Ala-1453–Leu-1471. The short motif at Thr-1462 to Ala-1465 is the Selectivity filter of repeat IV element. At Ala-1472 to Phe-1499 the chain is on the extracellular side. A dihydropyridine binding region spans residues Lys-1478–Lys-1546. Cys-1479 and Cys-1495 are oxidised to a cystine. Asn-1487 is a glycosylation site (N-linked (GlcNAc...) asparagine). The tract at residues Glu-1492–Trp-1534 is phenylalkylamine binding. A helical transmembrane segment spans residues Ala-1500 to Met-1524. Over Asp-1525–Leu-2221 the chain is Cytoplasmic. The interval Asp-1659–Gly-1686 is important for interaction with STAC1, STAC2 and STAC3. Positions Lys-1665 to Gln-1685 are calmodulin-binding IQ region. An important for localization in at the junctional membrane region spans residues Leu-1699–Ser-1718. Phosphoserine occurs at positions 1718 and 1739. Positions Ile-1778–Ser-1847 are disordered. The segment covering Ser-1799 to Ser-1811 has biased composition (polar residues). Residues Asn-1812–Ala-1822 show a composition bias toward low complexity. Ser-1981 carries the phosphoserine; by PKA modification. Disordered stretches follow at residues Ala-2029–Ser-2063 and Ala-2186–Leu-2221.

Belongs to the calcium channel alpha-1 subunit (TC 1.A.1.11) family. CACNA1C subfamily. In terms of assembly, component of a calcium channel complex consisting of a pore-forming alpha subunit (CACNA1C) and ancillary beta, gamma and delta subunits. The channel complex contains alpha, beta, gamma and delta subunits in a 1:1:1:1 ratio, i.e. it contains only one of each type of subunit. CACNA1C channel activity is modulated by ancillary subunits, such as CACNB1, CACNB2, CACNB3, CACNA2D1 and CACNA2D4. Interacts with the gamma subunits CACNG4, CACNG6, CACNG7 and CACNG8. Interacts with CACNB1. Interacts with CACNB2. Identified in a complex with CACNA2D4 and CACNB3. Interacts with CACNB3. Interacts with CACNA2D1. Interacts with CACNA2D4. Interacts with CALM1. Interacts (via the N-terminus and the C-terminal C and IQ motifs) with CABP1; this inhibits Ca(2+)-dependent channel inactivation. The binding via the C motif is calcium independent whereas the binding via IQ requires the presence of calcium and is mutually exclusive with calmodulin binding. The binding to the cytoplasmic N-terminal domain is calcium independent but is essential for the channel modulation. Interacts (via C-terminal CDB motif) with CABP5; in a calcium-dependent manner. Interacts with CIB1; the interaction increases upon cardiomyocytes hypertrophy. Interacts with STAC2 and STAC3; this inhibits channel inactivation. (Microbial infection) Interacts with influenzavirus H1 hemagglutinin. Post-translationally, phosphorylation by PKA at Ser-1981 activates the channel. Elevated levels of blood glucose lead to increased phosphorylation by PKA. As to expression, detected throughout the brain, including hippocampus, cerebellum and amygdala, throughout the heart and vascular system, including ductus arteriosus, in urinary bladder, and in retina and sclera in the eye. Expressed in brain, heart, jejunum, ovary, pancreatic beta-cells and vascular smooth muscle. Overall expression is reduced in atherosclerotic vascular smooth muscle.

It localises to the cell membrane. The protein resides in the sarcolemma. It is found in the perikaryon. The protein localises to the postsynaptic density membrane. Its subcellular location is the cell projection. It localises to the dendrite. The protein resides in the T-tubule. It carries out the reaction Ca(2+)(in) = Ca(2+)(out). Its activity is regulated as follows. Inhibited by dihydropyridines (DHP), such as isradipine. Inhibited by nifedipine. Channel activity is regulated by Ca(2+) and calmodulin. Binding of STAC1, STAC2 or STAC3 to a region that overlaps with the calmodulin binding site inhibits channel inactivation by Ca(2+) and calmodulin. Binding of calmodulin or CABP1 at the same regulatory sites results in opposite effects on the channel function. Shear stress and pressure increases calcium channel activity. Its function is as follows. Pore-forming, alpha-1C subunit of the voltage-gated calcium channel that gives rise to L-type calcium currents. Mediates influx of calcium ions into the cytoplasm, and thereby triggers calcium release from the sarcoplasm. Plays an important role in excitation-contraction coupling in the heart. Required for normal heart development and normal regulation of heart rhythm. Required for normal contraction of smooth muscle cells in blood vessels and in the intestine. Essential for normal blood pressure regulation via its role in the contraction of arterial smooth muscle cells. Long-lasting (L-type) calcium channels belong to the 'high-voltage activated' (HVA) group. In terms of biological role, pore-forming, alpha-1C subunit of the voltage-gated calcium channel that gives rise to L-type calcium currents. (Microbial infection) Acts as a receptor for Influenzavirus. May play a critical role in allowing virus entry when sialylated and expressed on lung tissues. The polypeptide is Voltage-dependent L-type calcium channel subunit alpha-1C (CACNA1C) (Homo sapiens (Human)).